We begin with the raw amino-acid sequence, 430 residues long: Aspartate aminotransferase, mitochondrial (430 aa).

The transit peptide at Met-1–Ala-29 directs the protein to the mitochondrion. A Phosphothreonine modification is found at Thr-48. Position 59 is an N6-acetyllysine (Lys-59). Position 65 (Gly-65) interacts with substrate. The residue at position 73 (Lys-73) is an N6-acetyllysine; alternate. An N6-succinyllysine; alternate modification is found at Lys-73. N6-acetyllysine is present on Lys-82. An N6-acetyllysine; alternate modification is found at Lys-90. At Lys-90 the chain carries N6-succinyllysine; alternate. A 3'-nitrotyrosine; alternate modification is found at Tyr-96. Tyr-96 bears the Phosphotyrosine; alternate mark. Lys-107 and Lys-122 each carry N6-acetyllysine; alternate. 2 positions are modified to N6-succinyllysine; alternate: Lys-107 and Lys-122. Ser-143 carries the phosphoserine modification. Lys-159 is modified (N6-acetyllysine; alternate). Lys-159 is modified (N6-succinyllysine; alternate). Trp-162 contacts substrate. An N6-acetyllysine; alternate modification is found at Lys-185. Position 185 is an N6-succinyllysine; alternate (Lys-185). Residue Asn-215 coordinates substrate. Position 227 is an N6-succinyllysine (Lys-227). Lys-234 is subject to N6-acetyllysine. 2 positions are modified to N6-acetyllysine; alternate: Lys-279 and Lys-296. At Lys-279 the chain carries N6-(pyridoxal phosphate)lysine; alternate. Lys-296 is subject to N6-succinyllysine; alternate. Lys-302 is subject to N6-acetyllysine. Lys-309 is subject to N6-acetyllysine; alternate. Lys-309 is subject to N6-succinyllysine; alternate. Position 313 is an asymmetric dimethylarginine (Arg-313). Thr-333 bears the Phosphothreonine mark. Residue Lys-338 is modified to N6-acetyllysine; alternate. Lys-338 is subject to N6-succinyllysine; alternate. Position 345 is an N6-acetyllysine (Lys-345). An N6-acetyllysine; alternate modification is found at Lys-363. At Lys-363 the chain carries N6-succinyllysine; alternate. Residues Lys-364 and Lys-387 each carry the N6-acetyllysine modification. Residues Lys-396 and Lys-404 each carry the N6-acetyllysine; alternate modification. Residues Lys-396 and Lys-404 each carry the N6-succinyllysine; alternate modification. Substrate is bound at residue Arg-407.

Belongs to the class-I pyridoxal-phosphate-dependent aminotransferase family. In terms of assembly, homodimer. It depends on pyridoxal 5'-phosphate as a cofactor.

It localises to the mitochondrion matrix. It is found in the cell membrane. It catalyses the reaction L-aspartate + 2-oxoglutarate = oxaloacetate + L-glutamate. The enzyme catalyses L-kynurenine + 2-oxoglutarate = kynurenate + L-glutamate + H2O. Functionally, catalyzes the irreversible transamination of the L-tryptophan metabolite L-kynurenine to form kynurenic acid (KA). As a member of the malate-aspartate shuttle, it has a key role in the intracellular NAD(H) redox balance. Is important for metabolite exchange between mitochondria and cytosol, and for amino acid metabolism. Facilitates cellular uptake of long-chain free fatty acids. This is Aspartate aminotransferase, mitochondrial (GOT2) from Macaca fascicularis (Crab-eating macaque).